Consider the following 135-residue polypeptide: Small ribosomal subunit protein uS11 (135 aa).

Belongs to the universal ribosomal protein uS11 family. As to quaternary structure, part of the 30S ribosomal subunit. Interacts with proteins S7 and S18. Binds to IF-3.

Functionally, located on the platform of the 30S subunit, it bridges several disparate RNA helices of the 16S rRNA. Forms part of the Shine-Dalgarno cleft in the 70S ribosome. The protein is Small ribosomal subunit protein uS11 of Polynucleobacter asymbioticus (strain DSM 18221 / CIP 109841 / QLW-P1DMWA-1) (Polynucleobacter necessarius subsp. asymbioticus).